The primary structure comprises 414 residues: Histidinol dehydrogenase (414 aa).

Tyr-116, Gln-177, and Asn-200 together coordinate NAD(+). The substrate site is built by Thr-223, Gln-245, and His-248. The Zn(2+) site is built by Gln-245 and His-248. Residues Glu-313 and His-314 each act as proton acceptor in the active site. The substrate site is built by His-314, Asp-347, Glu-401, and His-406. Residue Asp-347 participates in Zn(2+) binding. His-406 serves as a coordination point for Zn(2+).

This sequence belongs to the histidinol dehydrogenase family. The cofactor is Zn(2+).

It carries out the reaction L-histidinol + 2 NAD(+) + H2O = L-histidine + 2 NADH + 3 H(+). The protein operates within amino-acid biosynthesis; L-histidine biosynthesis; L-histidine from 5-phospho-alpha-D-ribose 1-diphosphate: step 9/9. In terms of biological role, catalyzes the sequential NAD-dependent oxidations of L-histidinol to L-histidinaldehyde and then to L-histidine. This is Histidinol dehydrogenase from Staphylococcus epidermidis (strain ATCC 35984 / DSM 28319 / BCRC 17069 / CCUG 31568 / BM 3577 / RP62A).